The sequence spans 106 residues: Putative membrane protein insertion efficiency factor (106 aa).

This sequence belongs to the UPF0161 family.

It localises to the cell inner membrane. Functionally, could be involved in insertion of integral membrane proteins into the membrane. The sequence is that of Putative membrane protein insertion efficiency factor from Acinetobacter baylyi (strain ATCC 33305 / BD413 / ADP1).